A 649-amino-acid chain; its full sequence is Microtubule-associated protein VP6 (649 aa).

It localises to the virion. The protein localises to the host cytoplasm. It is found in the host cytoskeleton. Its function is as follows. Minor inner capsid component. Displays NTPase and RNA 5'-triphosphatase (RTPase) activities. May function as a cofactor of polymerase VP2. Associates with microtubules and plays a role in the formation, structural organization and morphology of viral inclusions, where the assembly of cores and the replication of viral RNA occur. The protein is Microtubule-associated protein VP6 (S6) of Cryphonectria parasitica (Chestnut blight fungus).